A 194-amino-acid chain; its full sequence is Serine/threonine-protein kinase mos (194 aa).

The Protein kinase domain occupies 47–194 (LCLLNLLGSG…HLDLKPANIF (148 aa)). ATP contacts are provided by residues 53–61 (LGSGGFGSV) and lysine 74. Aspartate 187 functions as the Proton acceptor in the catalytic mechanism.

It belongs to the protein kinase superfamily. Ser/Thr protein kinase family.

The catalysed reaction is L-seryl-[protein] + ATP = O-phospho-L-seryl-[protein] + ADP + H(+). The enzyme catalyses L-threonyl-[protein] + ATP = O-phospho-L-threonyl-[protein] + ADP + H(+). In Dendroaspis angusticeps (Eastern green mamba), this protein is Serine/threonine-protein kinase mos (MOS).